A 331-amino-acid chain; its full sequence is 6-phosphogluconolactonase (331 aa).

This sequence belongs to the cycloisomerase 2 family.

It carries out the reaction 6-phospho-D-glucono-1,5-lactone + H2O = 6-phospho-D-gluconate + H(+). It functions in the pathway carbohydrate degradation; pentose phosphate pathway; D-ribulose 5-phosphate from D-glucose 6-phosphate (oxidative stage): step 2/3. Its function is as follows. Catalyzes the hydrolysis of 6-phosphogluconolactone to 6-phosphogluconate. The protein is 6-phosphogluconolactonase of Salmonella arizonae (strain ATCC BAA-731 / CDC346-86 / RSK2980).